A 372-amino-acid polypeptide reads, in one-letter code: Fatty acid 2-hydroxylase (372 aa).

One can recognise a Cytochrome b5 heme-binding domain in the interval 8-86 (AASFSPSEVQ…LEQYYVGELR (79 aa)). Heme is bound by residues histidine 43 and histidine 69. 2 helical membrane passes run 168–188 (VWYS…WSYY) and 213–233 (SMFP…EYLI). The Fatty acid hydroxylase domain occupies 219–361 (FMLGIFLWSL…TKLWDYCFHT (143 aa)). Zn(2+)-binding residues include histidine 234, histidine 239, histidine 257, histidine 260, and histidine 261. 2 helical membrane passes run 271–291 (VFPP…LQLI) and 292–312 (LPEA…VLYD). Histidine 315, histidine 319, histidine 336, histidine 339, and histidine 340 together coordinate Zn(2+).

The protein belongs to the sterol desaturase family. SCS7 subfamily. The cofactor is Zn(2+).

It localises to the endoplasmic reticulum membrane. Its subcellular location is the microsome membrane. The enzyme catalyses a 1,2-saturated fatty acid + 2 Fe(II)-[cytochrome b5] + O2 + 2 H(+) = a (R)-2-hydroxy fatty acid + 2 Fe(III)-[cytochrome b5] + H2O. The catalysed reaction is hexadecanoate + 2 Fe(II)-[cytochrome b5] + O2 + 2 H(+) = (R)-2-hydroxyhexadecanoate + 2 Fe(III)-[cytochrome b5] + H2O. It catalyses the reaction octadecanoate + 2 Fe(II)-[cytochrome b5] + O2 + 2 H(+) = (R)-2-hydroxyoctadecanoate + 2 Fe(III)-[cytochrome b5] + H2O. It carries out the reaction docosanoate + 2 Fe(II)-[cytochrome b5] + O2 + 2 H(+) = 2-hydroxydocosanoate + 2 Fe(III)-[cytochrome b5] + H2O. The enzyme catalyses tetracosanoate + 2 Fe(II)-[cytochrome b5] + O2 + 2 H(+) = (R)-2-hydroxytetracosanoate + 2 Fe(III)-[cytochrome b5] + H2O. Its pathway is lipid metabolism; fatty acid metabolism. It participates in sphingolipid metabolism; galactosylceramide biosynthesis. Catalyzes the hydroxylation of free fatty acids at the C-2 position to produce 2-hydroxy fatty acids, which are building blocks of sphingolipids and glycosphingolipids common in neural tissue and epidermis. FA2H is stereospecific for the production of (R)-2-hydroxy fatty acids. Plays an essential role in the synthesis of galactosphingolipids of the myelin sheath. Responsible for the synthesis of sphingolipids and glycosphingolipids involved in the formation of epidermal lamellar bodies critical for skin permeability barrier. Participates in the synthesis of glycosphingolipids and a fraction of type II wax diesters in sebaceous gland, specifically regulating hair follicle homeostasis. Involved in the synthesis of sphingolipids of plasma membrane rafts, controlling lipid raft mobility and trafficking of raft-associated proteins. In Macaca fascicularis (Crab-eating macaque), this protein is Fatty acid 2-hydroxylase (FA2H).